Reading from the N-terminus, the 306-residue chain is tRNA dimethylallyltransferase (306 aa).

Position 13-20 (13-20) interacts with ATP; that stretch reads GPTGAGKT. A substrate-binding site is contributed by 15–20; sequence TGAGKT. 2 interaction with substrate tRNA regions span residues 38–41 and 161–165; these read DSRQ and QRNAR.

This sequence belongs to the IPP transferase family. Monomer. It depends on Mg(2+) as a cofactor.

The catalysed reaction is adenosine(37) in tRNA + dimethylallyl diphosphate = N(6)-dimethylallyladenosine(37) in tRNA + diphosphate. Catalyzes the transfer of a dimethylallyl group onto the adenine at position 37 in tRNAs that read codons beginning with uridine, leading to the formation of N6-(dimethylallyl)adenosine (i(6)A). The protein is tRNA dimethylallyltransferase of Maridesulfovibrio salexigens (strain ATCC 14822 / DSM 2638 / NCIMB 8403 / VKM B-1763) (Desulfovibrio salexigens).